Consider the following 156-residue polypeptide: Anaerobic nitrite reductase HB2 (156 aa).

One can recognise a Globin domain in the interval 2–151 (GFTDKQEALV…LASAIKAEMH (150 aa)). The short motif at 35–39 (EIAPV) is the Homodimerization element. Serine 45, lysine 59, histidine 63, and histidine 98 together coordinate heme b. The Homodimerization signature appears at 105–117 (DPHFEVVKEALLR).

It belongs to the plant globin family. Homodimer. Heme b is required as a cofactor.

The protein resides in the cytoplasm. It is found in the nucleus. It carries out the reaction Fe(III)-heme b-[protein] + nitric oxide + H2O = Fe(II)-heme b-[protein] + nitrite + 2 H(+). Phytoglobin that reduces nitrite to nitric oxide (NO) under anoxic conditions (e.g. during flooding or in waterlogged soil). May not function as an oxygen storage or transport protein. Has an unusually high affinity for O(2) through an hexacoordinate heme iron because of a very low dissociation constant. This chain is Anaerobic nitrite reductase HB2, found in Solanum lycopersicum (Tomato).